The primary structure comprises 268 residues: Ubiquinone biosynthesis protein COQ4 homolog, mitochondrial (268 aa).

The transit peptide at 1–25 (MMQRCLRLQKPLALRRGLHLAQVNS) directs the protein to the mitochondrion. 4 residues coordinate Zn(2+): His171, Asp172, His175, and Glu187.

Belongs to the COQ4 family. As to quaternary structure, component of a multi-subunit COQ enzyme complex. Requires Zn(2+) as cofactor.

It is found in the mitochondrion inner membrane. The catalysed reaction is a 4-hydroxy-3-methoxy-5-(all-trans-polyprenyl)benzoate + H(+) = a 2-methoxy-6-(all-trans-polyprenyl)phenol + CO2. It functions in the pathway cofactor biosynthesis; ubiquinone biosynthesis. Its function is as follows. Lyase that catalyzes the C1-decarboxylation of 4-hydroxy-3-methoxy-5-(all-trans-polyprenyl)benzoic acid into 2-methoxy-6-(all-trans-polyprenyl)phenol during ubiquinone biosynthesis. The chain is Ubiquinone biosynthesis protein COQ4 homolog, mitochondrial from Drosophila simulans (Fruit fly).